A 515-amino-acid chain; its full sequence is Mucin-like protein Glc1.8b (515 aa).

Positions 1–20 (MSQITLIILVLAIGFSCTKS) are cleaved as a signal peptide. The Extracellular segment spans residues 21–467 (HPINSTRDGE…ANDIKKPAFP (447 aa)). Residues asparagine 24, asparagine 45, asparagine 51, asparagine 60, asparagine 85, asparagine 93, asparagine 102, asparagine 123, asparagine 129, asparagine 138, asparagine 180, asparagine 201, asparagine 207, asparagine 216, asparagine 258, asparagine 279, asparagine 285, asparagine 294, asparagine 319, asparagine 327, asparagine 336, asparagine 357, asparagine 363, asparagine 372, asparagine 397, asparagine 405, asparagine 413, asparagine 434, and asparagine 441 are each glycosylated (N-linked (GlcNAc...) asparagine; by host). A disordered region spans residues 80–114 (SKKDENITGQSEINTSAKSQPINSTRDGEDSGTDL). Residues 86–104 (ITGQSEINTSAKSQPINST) are compositionally biased toward polar residues. Residues 314–358 (SKKDENITGQSEINTSAKSQPINSTRDGEDSGTDLKNLLTDPANT) form a disordered region. Residues 320–338 (ITGQSEINTSAKSQPINST) are compositionally biased toward polar residues. The interval 393–413 (RKDENVTGQSEFNISTNSNLN) is disordered. The chain crosses the membrane as a helical span at residues 468–488 (YCIILITFQIVTVGMIIYLVF). Topologically, residues 489–515 (RTMRKPCQSERAIPLNSFGFGNNSSYE) are cytoplasmic.

It belongs to the polydnaviridae Glc1.8 protein family.

Its subcellular location is the host membrane. Involved in suppression of the insect cellular immune response. Inhibits host hemocyte adhesion and phagocytosis. This chain is Mucin-like protein Glc1.8b (O16), found in Microplitis demolitor (Parasitoid wasp).